Here is a 456-residue protein sequence, read N- to C-terminus: MLKTSFLLSKRNAVSLSRVLATGISGRNVRHLTLQPSEHYDVAIVGGGIVGLATARELILRHPKLTFCVLEKEKELSMHQSGHNSGVIHCGIYYTPGSLKAKLCVQGLDLTYQYCDEHNIPYKKCGKLIVAVEDKEIPLLNNLYERGKKNGVKDLTMVDKRGIKEIEPHCEGMFAIVSPNTGIVDWAQVALAYGDDFRKGGGDIFTGYEVTDFKCASESGKSQEKEAGLTHPVTVFSNNKQTIKCRYVITCGGLYSDRLAEKSGCNREPRIVPFRGDYLVLKPEKCHLVKGNIYPVPDPNFPFLGVHFTPRMDGSVWLGPNAVLAFAREGYNLLDINLRDLADALAFRGLRQLMFKYFSFGVGEYYRGLNHAAQVKQLQKYIPSVTADDVVSGPSGVRAQALDRDGNLVDDFVFDGGVGEIGSRVLHVRNAPSPAATSSLAIARMVADKAAERFTL.

A mitochondrion-targeting transit peptide spans 1 to 20 (MLKTSFLLSKRNAVSLSRVL).

Belongs to the L2HGDH family. FAD serves as cofactor.

Its subcellular location is the mitochondrion. The catalysed reaction is (S)-2-hydroxyglutarate + A = 2-oxoglutarate + AH2. In Nematostella vectensis (Starlet sea anemone), this protein is L-2-hydroxyglutarate dehydrogenase, mitochondrial.